The sequence spans 559 residues: Serine/threonine-protein kinase VRK1 (559 aa).

In terms of domain architecture, Protein kinase spans 32–388 (YIVGKQFATG…EDDDEEEEVI (357 aa)). ATP is bound by residues 38-46 (FATGGFGRI) and K61. D167 functions as the Proton acceptor in the catalytic mechanism. Disordered stretches follow at residues 315–419 (EAAQ…ATSD) and 448–559 (SSCE…SSEV). Composition is skewed to polar residues over residues 405-418 (RSFN…TATS) and 449-460 (SCESQYESNEPG). Residues 533–542 (TSARYQEKRA) are compositionally biased toward basic and acidic residues. The segment covering 545 to 559 (NTKPTFDDSSCSSEV) has biased composition (polar residues).

This sequence belongs to the protein kinase superfamily. CK1 Ser/Thr protein kinase family. VRK subfamily. Post-translationally, autophosphorylates in vitro.

It localises to the nucleus. The protein resides in the cytoplasm. Its subcellular location is the cajal body. The catalysed reaction is L-seryl-[protein] + ATP = O-phospho-L-seryl-[protein] + ADP + H(+). It carries out the reaction L-threonyl-[protein] + ATP = O-phospho-L-threonyl-[protein] + ADP + H(+). Serine/threonine kinase that phosphorylates baf-1, thus regulating the association of baf-1 with chromatin and nuclear membrane proteins during nuclear envelope formation. May act through the egl-17 signaling pathway. Essential in hermaphrodites for formation of the vulva, uterus, and uterine seam cells and for development and maintenance of the somatic gonad and thus the germ line. Acts to prevent cep-1 from triggering an inappropriate cell cycle arrest, thereby promoting germ cell proliferation. Regulates anchor cell polarity and the timing of anchor cell invasion through the basement membranes separating vulval and somatic gonadal cells during the L3 larval stage. This Caenorhabditis briggsae protein is Serine/threonine-protein kinase VRK1.